The following is a 101-amino-acid chain: UPF0125 protein VC_0850 (101 aa).

It belongs to the UPF0125 (RnfH) family.

The polypeptide is UPF0125 protein VC_0850 (Vibrio cholerae serotype O1 (strain ATCC 39315 / El Tor Inaba N16961)).